Reading from the N-terminus, the 262-residue chain is 5'-nucleotidase SurE (262 aa).

Residues Asp8, Asp9, Ser40, and Asn92 each coordinate a divalent metal cation.

It belongs to the SurE nucleotidase family. The cofactor is a divalent metal cation.

It is found in the cytoplasm. The enzyme catalyses a ribonucleoside 5'-phosphate + H2O = a ribonucleoside + phosphate. Nucleotidase that shows phosphatase activity on nucleoside 5'-monophosphates. The protein is 5'-nucleotidase SurE of Xylella fastidiosa (strain M23).